The following is a 347-amino-acid chain: Elongation factor Ts (347 aa).

The segment at 80–83 (TDFV) is involved in Mg(2+) ion dislocation from EF-Tu.

It belongs to the EF-Ts family.

The protein localises to the cytoplasm. In terms of biological role, associates with the EF-Tu.GDP complex and induces the exchange of GDP to GTP. It remains bound to the aminoacyl-tRNA.EF-Tu.GTP complex up to the GTP hydrolysis stage on the ribosome. The chain is Elongation factor Ts from Streptococcus gordonii (strain Challis / ATCC 35105 / BCRC 15272 / CH1 / DL1 / V288).